Reading from the N-terminus, the 317-residue chain is Adenosine receptor A3 (317 aa).

Residues 1–14 lie on the Extracellular side of the membrane; that stretch reads MPVNSTAVSLASVT. Asn-4 carries an N-linked (GlcNAc...) asparagine glycan. A helical transmembrane segment spans residues 15–37; sequence YISVEILIGLCAIVGNVLVIWVV. Topologically, residues 38-48 are cytoplasmic; it reads KLNPSLQTTTF. The chain crosses the membrane as a helical span at residues 49 to 72; it reads YFIVSLALADIAVGVLVMPLAIVI. The Extracellular segment spans residues 73 to 84; sequence SLGVTIHFYSCL. Cys-83 and Cys-165 are joined by a disulfide. A helical membrane pass occupies residues 85-106; sequence LMTCLLMIFTHASIMSLLAIAV. At 107 to 126 the chain is on the cytoplasmic side; sequence DRYLRVKLTVRYRRVTTQRR. The chain crosses the membrane as a helical span at residues 127–148; sequence IWLALGLCWLVSFLVGLTPMFG. The Extracellular portion of the chain corresponds to 149 to 176; sequence WNMKLSSADKNLTFLPCQFRSVMRMDYM. Residues 177–197 form a helical membrane-spanning segment; it reads VYFSFFTWILIPLVVMCAIYF. The Cytoplasmic segment spans residues 198 to 230; it reads DIFYVIRNRLSQNFSGSKETGAFYGREFKTAKS. A helical transmembrane segment spans residues 231–254; it reads LSLVLFLFALSWLPLSIINCIIYF. The Extracellular segment spans residues 255-260; the sequence is NGEVPQ. A helical transmembrane segment spans residues 261 to 283; it reads IVLYLGILLSHANSMMNPIVYAY. Residues 284-317 lie on the Cytoplasmic side of the membrane; that stretch reads KIKKFKETYLLILKACVICQPSKSMDPSIEQTSE. Cys-302 carries the S-palmitoyl cysteine lipid modification.

It belongs to the G-protein coupled receptor 1 family. Post-translationally, phosphorylation on Thr-315 and Ser-316 may be crucial for rapid desensitization. Phosphorylation on Thr-315 may be necessary for phosphorylation on Ser-316 to occur.

Its subcellular location is the cell membrane. In terms of biological role, receptor for adenosine. The activity of this receptor is mediated by G proteins which inhibits adenylyl cyclase. The protein is Adenosine receptor A3 (ADORA3) of Bos taurus (Bovine).